The following is a 337-amino-acid chain: uncharacterized protein (337 aa).

One can recognise an F-box domain in the interval 22–76 (PFRLLSLPTLALKNVLLHIDFIDLLELSLASKKCEIYMKTCCLKIDSLHFHFRRI).

This is an uncharacterized protein from Caenorhabditis elegans.